Reading from the N-terminus, the 318-residue chain is Cis-3-alkyl-4-alkyloxetan-2-one decarboxylase (318 aa).

The AB hydrolase-1 domain maps to proline 30–aspartate 275.

Belongs to the AB hydrolase superfamily.

The enzyme catalyses a cis-3-alkyl-4-alkyloxetan-2-one = a cis-alkene + CO2. Its function is as follows. Involved in olefin biosynthesis. Catalyzes the elimination of carbon dioxide from beta-lactones to form the final olefin product. The S.oneidensis oleABCD genes produce 3,6,9,12,15,19,22,25,28-hentriacontanonaene, which may aid the cells in adapting to a sudden drop in temperature. The sequence is that of Cis-3-alkyl-4-alkyloxetan-2-one decarboxylase from Shewanella oneidensis (strain ATCC 700550 / JCM 31522 / CIP 106686 / LMG 19005 / NCIMB 14063 / MR-1).